The primary structure comprises 424 residues: Zona pellucida sperm-binding protein 3 (424 aa).

The first 22 residues, 1-22, serve as a signal peptide directing secretion; sequence MGLSYGLFICFLLWAGTGLCYP. Topologically, residues 23 to 383 are extracellular; the sequence is PTTTEDKTHP…VEGSTSPHTS (361 aa). The region spanning 43 to 305 is the ZP domain; it reads ECRHAWLVVN…KACSFIKSSN (263 aa). Cystine bridges form between Cys-44–Cys-138 and Cys-76–Cys-97. Asn-52 carries an N-linked (GlcNAc...) asparagine glycan. N-linked (GlcNAc...) asparagine glycans are attached at residues Asn-123 and Asn-145. 3 O-linked (GalNAc...) threonine glycosylation sites follow: Thr-154, Thr-160, and Thr-161. 2 cysteine pairs are disulfide-bonded: Cys-215–Cys-280 and Cys-237–Cys-298. A propeptide spans 349–424 (removed in mature form); sequence RRHVTEEADI…PMICPVSASQ (76 aa). A helical transmembrane segment spans residues 384–404; that stretch reads VMVGIGLATVLSLTLATIVLG. The Cytoplasmic portion of the chain corresponds to 405–424; the sequence is LARRHHTASRPMICPVSASQ.

It belongs to the ZP domain family. ZPC subfamily. In terms of assembly, polymers of ZP2 and ZP3 organized into long filaments cross-linked by ZP1 homodimers. Interacts with ZP1 and ZP2. Post-translationally, proteolytically cleaved before the transmembrane segment to yield the secreted ectodomain incorporated in the zona pellucida. In terms of processing, N-glycosylated. O-glycosylated; removal of O-linked glycans may play an important role in the post-fertilization block to polyspermy. Expressed in oocytes.

The protein localises to the zona pellucida. The protein resides in the cell membrane. Component of the zona pellucida, an extracellular matrix surrounding oocytes which mediates sperm binding, induction of the acrosome reaction and prevents post-fertilization polyspermy. The zona pellucida is composed of 3 to 4 glycoproteins, ZP1, ZP2, ZP3, and ZP4. ZP3 is essential for sperm binding and zona matrix formation. This Felis catus (Cat) protein is Zona pellucida sperm-binding protein 3 (ZP3).